A 213-amino-acid chain; its full sequence is ATP phosphoribosyltransferase (213 aa).

The protein belongs to the ATP phosphoribosyltransferase family. Short subfamily. Heteromultimer composed of HisG and HisZ subunits.

The protein localises to the cytoplasm. The catalysed reaction is 1-(5-phospho-beta-D-ribosyl)-ATP + diphosphate = 5-phospho-alpha-D-ribose 1-diphosphate + ATP. It participates in amino-acid biosynthesis; L-histidine biosynthesis; L-histidine from 5-phospho-alpha-D-ribose 1-diphosphate: step 1/9. In terms of biological role, catalyzes the condensation of ATP and 5-phosphoribose 1-diphosphate to form N'-(5'-phosphoribosyl)-ATP (PR-ATP). Has a crucial role in the pathway because the rate of histidine biosynthesis seems to be controlled primarily by regulation of HisG enzymatic activity. This chain is ATP phosphoribosyltransferase, found in Variovorax paradoxus (strain S110).